Here is a 327-residue protein sequence, read N- to C-terminus: Malate dehydrogenase 1 (327 aa).

12–18 (GAAGQIA) is an NAD(+) binding site. Substrate is bound by residues Arg93 and Arg99. NAD(+)-binding positions include Asn106, Gln113, and 130 to 132 (VGN). 2 residues coordinate substrate: Asn132 and Arg163. The active-site Proton acceptor is the His188.

This sequence belongs to the LDH/MDH superfamily. MDH type 2 family.

The enzyme catalyses (S)-malate + NAD(+) = oxaloacetate + NADH + H(+). Functionally, catalyzes the reversible oxidation of malate to oxaloacetate. The polypeptide is Malate dehydrogenase 1 (Burkholderia thailandensis (strain ATCC 700388 / DSM 13276 / CCUG 48851 / CIP 106301 / E264)).